Here is a 368-residue protein sequence, read N- to C-terminus: E3 ubiquitin-protein ligase ATL31 (368 aa).

Positions 1-23 are cleaved as a signal peptide; it reads MDPIKHISLPVLVLFLLLSVSAG. The helical transmembrane segment at 46–66 threads the bilayer; the sequence is AVVVVVVIAALFFMGFFTVYI. An RING-type; atypical zinc finger spans residues 124–166; it reads CAICLNEFEDDETLRLLPKCDHVFHPHCIGAWLQGHVTCPVCR. Ser-247 is subject to Phosphoserine. The segment at 342–368 is disordered; that stretch reads NKDGEGTSSVQHIGTVGSTSGSLRLPV. Positions 347–368 are enriched in polar residues; sequence GTSSVQHIGTVGSTSGSLRLPV.

Belongs to the RING-type zinc finger family. ATL subfamily.

The protein resides in the membrane. It catalyses the reaction S-ubiquitinyl-[E2 ubiquitin-conjugating enzyme]-L-cysteine + [acceptor protein]-L-lysine = [E2 ubiquitin-conjugating enzyme]-L-cysteine + N(6)-ubiquitinyl-[acceptor protein]-L-lysine.. It functions in the pathway protein modification; protein ubiquitination. E3 ubiquitin-protein ligase that is required for the plant C/N response during seedling growth transition. May be involved in the early steps of the plant defense signaling pathway. This chain is E3 ubiquitin-protein ligase ATL31 (ATL31), found in Arabidopsis thaliana (Mouse-ear cress).